The primary structure comprises 215 residues: UPF0488 protein C8orf33 homolog (215 aa).

Disordered stretches follow at residues 1–72 (MLED…DEQL), 87–111 (LRTQKTSSKQREEASRALKTLRSSK), and 158–199 (CKPV…DTKP). The segment covering 29–39 (AKKHKKKKKKK) has biased composition (basic residues). The segment covering 40–63 (AGEGKDDQQRETKTTEGETAKQET) has biased composition (basic and acidic residues). Basic and acidic residues-rich tracts occupy residues 167–178 (ERNTQPKNKTDG) and 188–199 (TNEHTKTEDTKP).

The protein belongs to the UPF0488 family.

In Danio rerio (Zebrafish), this protein is UPF0488 protein C8orf33 homolog.